A 612-amino-acid polypeptide reads, in one-letter code: MSAELIAVYKDEQIIDLESAKVLGLSDGVKALKGSEPIYFDDSPLALEVIRHSCAHLLAQSLKALYPDAKFFVGPVVEEGFYYDFKTASKISEEDLPKIEAKMKEFAKSKLAITKEVLTKEQALERFKGDELKHAVMSKISGDAFGVYQQGGFEDLCKGPHLPNTRFLNHFKLTKLAGAYLGGDEKNEMLIRIYGIAFATKEGLKDYLFQIEEAKKRDHRKLGVELGLFSFDDEIGAGLPLWLPKGARLRKRIEDLLSKALLLRGYEPVKGPEILKSDVWKISGHYDNYKENMYFTTIDEQEYGIKPMNCVGHIKVYQSALHSYRDLPLRFYEYGVVHRHEKSGVLHGLLRVREFTQDDAHIFCSFEQIQSEVSAILDFTHKIMKAFDFSYEMELSTRPAKSIGDDKVWEKATNALKEALKEHHINYKIDEGGGAFYGPKIDIKITDALKRKWQCGTIQVDMNLPERFKLAFTNEHNNAEQPVMIHRAILGSFERFIAILSEHFWGNFPFFVAPTQIVLIPINEEHHVFALKLKEELKKRDIFVEVLDKNDSLNKKVRLAEKQKIPMILVLGNEEMETEILSIRDREKQAQYKMPLKEFLNMVESKMQEVSF.

Residues 218–509 form a catalytic region; it reads DHRKLGVELG…LSEHFWGNFP (292 aa). Residues C310, H361, and H486 each coordinate Zn(2+).

This sequence belongs to the class-II aminoacyl-tRNA synthetase family. Homodimer. Requires Zn(2+) as cofactor.

It is found in the cytoplasm. The enzyme catalyses tRNA(Thr) + L-threonine + ATP = L-threonyl-tRNA(Thr) + AMP + diphosphate + H(+). Its function is as follows. Catalyzes the attachment of threonine to tRNA(Thr) in a two-step reaction: L-threonine is first activated by ATP to form Thr-AMP and then transferred to the acceptor end of tRNA(Thr). Also edits incorrectly charged L-seryl-tRNA(Thr). The sequence is that of Threonine--tRNA ligase from Helicobacter acinonychis (strain Sheeba).